The chain runs to 251 residues: 5-oxoprolinase subunit A 3 (251 aa).

This sequence belongs to the LamB/PxpA family. In terms of assembly, forms a complex composed of PxpA, PxpB and PxpC.

The enzyme catalyses 5-oxo-L-proline + ATP + 2 H2O = L-glutamate + ADP + phosphate + H(+). Its function is as follows. Catalyzes the cleavage of 5-oxoproline to form L-glutamate coupled to the hydrolysis of ATP to ADP and inorganic phosphate. In Pseudomonas aeruginosa (strain ATCC 15692 / DSM 22644 / CIP 104116 / JCM 14847 / LMG 12228 / 1C / PRS 101 / PAO1), this protein is 5-oxoprolinase subunit A 3.